The sequence spans 22 residues: Conotoxin MIIIJ (22 aa).

At Gln1 the chain carries Pyrrolidone carboxylic acid. 3 cysteine pairs are disulfide-bonded: Cys3/Cys21, Cys4/Cys19, and Cys9/Cys22.

It belongs to the conotoxin M superfamily. In terms of tissue distribution, expressed by the venom duct.

Its subcellular location is the secreted. Functionally, probable competitive antagonist of fish muscle acetylcholine receptor. Inhibits postsynaptic nicotinic acetylcholine receptors (nAChRs) from fish (zebrafish and goldfish) and frogs (IC(50)=0.1 uM). Protects these receptors from block by alpha-bungarotoxin and alpha-conotoxin EI. Does not block nAChRs at the neuromuscular junction of Rana pipiens. Shows a weak inhibition on mammalian adult and fetal muscle nAChRs (alpha-1-beta-1-delta-epsilon/CHRNA1-CHRNB1-CHRND-CHRNE and alpha-1 beta-1 gamma delta/CHRNA1-CHRNB1-CHRNG-CHRND) (IC(50)=3-45 uM). In vivo, induces paralysis in goldfish (Carassius auratus) but not mice. This is Conotoxin MIIIJ from Conus magus (Magical cone).